Reading from the N-terminus, the 105-residue chain is uncharacterized protein (105 aa).

A helical transmembrane segment spans residues 64 to 84; the sequence is ILLISIFFLLLFALPQHTMGI.

The protein localises to the membrane. This is an uncharacterized protein from Saccharomyces cerevisiae (strain ATCC 204508 / S288c) (Baker's yeast).